Consider the following 662-residue polypeptide: UvrABC system protein B (662 aa).

Residues 31 to 188 form the Helicase ATP-binding domain; that stretch reads DNIEGGEKAQ…NDLVDIQFER (158 aa). 44 to 51 provides a ligand contact to ATP; it reads GATGTGKT. Residues 97–120 carry the Beta-hairpin motif; it reads YYDYYQPEAYVPSSDTYIEKDSSV. Residues 435 to 601 form the Helicase C-terminal domain; that stretch reads QIDDLLGEIN…TIKKEIRDLI (167 aa). The UVR domain occupies 626 to 661; the sequence is KELVKKLEKQMQEAVEVLDFELAAQIRDMMLEVKAL.

This sequence belongs to the UvrB family. Forms a heterotetramer with UvrA during the search for lesions. Interacts with UvrC in an incision complex.

Its subcellular location is the cytoplasm. The UvrABC repair system catalyzes the recognition and processing of DNA lesions. A damage recognition complex composed of 2 UvrA and 2 UvrB subunits scans DNA for abnormalities. Upon binding of the UvrA(2)B(2) complex to a putative damaged site, the DNA wraps around one UvrB monomer. DNA wrap is dependent on ATP binding by UvrB and probably causes local melting of the DNA helix, facilitating insertion of UvrB beta-hairpin between the DNA strands. Then UvrB probes one DNA strand for the presence of a lesion. If a lesion is found the UvrA subunits dissociate and the UvrB-DNA preincision complex is formed. This complex is subsequently bound by UvrC and the second UvrB is released. If no lesion is found, the DNA wraps around the other UvrB subunit that will check the other stand for damage. In Streptococcus pneumoniae (strain Taiwan19F-14), this protein is UvrABC system protein B.